A 140-amino-acid polypeptide reads, in one-letter code: Profilin-2 (140 aa).

A2 carries the post-translational modification N-acetylalanine.

The protein belongs to the profilin family. Occurs in many kinds of cells as a complex with monomeric actin in a 1:1 ratio. Interacts with PFN2. Interacts with ACTMAP (via N-terminus); the interaction may facilitate efficient cleavage of the acetylated N-terminus of immature actin by ACTMAP.

Its subcellular location is the cytoplasm. It localises to the cytoskeleton. Its function is as follows. Binds to actin and affects the structure of the cytoskeleton. At high concentrations, profilin prevents the polymerization of actin, whereas it enhances it at low concentrations. By binding to PIP2, it inhibits the formation of IP3 and DG. The polypeptide is Profilin-2 (Pfn2) (Rattus norvegicus (Rat)).